Reading from the N-terminus, the 224-residue chain is Endonuclease NucS (224 aa).

This sequence belongs to the NucS endonuclease family.

The protein resides in the cytoplasm. Functionally, cleaves both 3' and 5' ssDNA extremities of branched DNA structures. The protein is Endonuclease NucS of Rhodococcus erythropolis (strain PR4 / NBRC 100887).